Consider the following 264-residue polypeptide: NAD-capped RNA hydrolase NudC (264 aa).

Substrate is bound at residue arginine 70. Zn(2+) contacts are provided by cysteine 99 and cysteine 102. Glutamate 112 provides a ligand contact to substrate. Zn(2+)-binding residues include cysteine 117 and cysteine 122. Tyrosine 127 is a binding site for substrate. In terms of domain architecture, Nudix hydrolase spans 128-257; sequence PVICPSIIVA…TIALKLINAT (130 aa). Residues alanine 166, glutamate 182, and glutamate 186 each contribute to the a divalent metal cation site. A Nudix box motif is present at residues 167–188; that stretch reads GFVEIGESFEQTVEREVFEETG. Substrate is bound at residue 200–207; sequence QPWAFPNS. Glutamate 227 is an a divalent metal cation binding site. Substrate is bound at residue alanine 250.

It belongs to the Nudix hydrolase family. NudC subfamily. As to quaternary structure, homodimer. Mg(2+) is required as a cofactor. The cofactor is Mn(2+). It depends on Zn(2+) as a cofactor.

The catalysed reaction is a 5'-end NAD(+)-phospho-ribonucleoside in mRNA + H2O = a 5'-end phospho-adenosine-phospho-ribonucleoside in mRNA + beta-nicotinamide D-ribonucleotide + 2 H(+). The enzyme catalyses NAD(+) + H2O = beta-nicotinamide D-ribonucleotide + AMP + 2 H(+). It catalyses the reaction NADH + H2O = reduced beta-nicotinamide D-ribonucleotide + AMP + 2 H(+). Functionally, mRNA decapping enzyme that specifically removes the nicotinamide adenine dinucleotide (NAD) cap from a subset of mRNAs by hydrolyzing the diphosphate linkage to produce nicotinamide mononucleotide (NMN) and 5' monophosphate mRNA. The NAD-cap is present at the 5'-end of some mRNAs and stabilizes RNA against 5'-processing. Has preference for mRNAs with a 5'-end purine. Catalyzes the hydrolysis of a broad range of dinucleotide pyrophosphates. The protein is NAD-capped RNA hydrolase NudC of Actinobacillus succinogenes (strain ATCC 55618 / DSM 22257 / CCUG 43843 / 130Z).